The following is a 338-amino-acid chain: Glyceraldehyde-3-phosphate dehydrogenase (338 aa).

NAD(+) contacts are provided by residues 12-13, Asp34, and Arg79; that span reads RI. D-glyceraldehyde 3-phosphate is bound by residues 150–152, Thr181, 210–211, and Arg233; these read SCT and TG. Residue Cys151 is the Nucleophile of the active site. NAD(+) is bound at residue Asn316.

The protein belongs to the glyceraldehyde-3-phosphate dehydrogenase family. Homotetramer.

Its subcellular location is the cytoplasm. The catalysed reaction is D-glyceraldehyde 3-phosphate + phosphate + NAD(+) = (2R)-3-phospho-glyceroyl phosphate + NADH + H(+). It participates in carbohydrate degradation; glycolysis; pyruvate from D-glyceraldehyde 3-phosphate: step 1/5. This chain is Glyceraldehyde-3-phosphate dehydrogenase (GPD), found in Phaffia rhodozyma (Yeast).